Reading from the N-terminus, the 1436-residue chain is MMNNRNNNKDKNPVKRFNKISIGLASPESILKESRGEVLKPETINYRTHKPERDGLFCERIFGPVKDFECACGKYKRIRYKGIICDRCGVEVTEKKVRRDRVGHINLVVPIAHIWYFRSLPNKIGYILGLPSKKLDMIIYYERYVVIQAGIAKNADGESLQRLDFLTEEEYLNILDTLPQENQYLDDLDPNKFVAKMGAECIMDLLARIDLDALSYELRHSANNETSKQRKTEALKRLQVVESFRESNENRENRPEWMIMKVVPVIPPELRPLVPLDGGRFATSDLNDLYRRVIIRNNRLKRLMEIKAPEVILRNEKRMLQESVDSLFDNTRKASAVKTESNRPLKSLSDSLKGKQGRFRQNLLGKRVDYSARSVIVVGPELKLYECGLPKDMASELYKPFVIRKLIERGIVKTVKSAKKIIDKKEPVVWDILENVIKGHPVLLNRAPTLHRLGIQAFQPKLIEGKAIQLHPLVCTAFNADFDGDQMAVHLPLGPEAILEAQLLMLASHNILNPANGAPITVPSQDMVLGLYYMTKERISTEDHIILGQDLTFYSAEEVNIALNEGRLELNARVKIRAKDFNDAGELVYKIIQTTAGRVLFNEVVPEAAGYINDVLTKKNLRDIIGHILSVTDVPTTAAFLDNMKDMGYKFAFRGGLSFSLGDIRIPEQKTKLIADAREQVEGISTNYNMGLITNNERYNQVIDVWTSANAQLTELAMKNIREDQQGFNSVYMMLDSGARGSKEQIRQLTGMRGLMAKPKKSTAGGGEIIENPILSNFKEGLSILEYFISTHGARKGLADTALKTADAGYLTRRLHDVSQDVIVNIEDCGTLRGVEVAALKKNEEIVESLGERILGRVALQDVINPLTNEVMVQSGQQITEAIVKTIEASPIEKVEVRSPLTCEALKGICAKCYGRNLATGKMTQRGEAVGVIAAQSIGEPGTQLTLRTFHVGGVAGGISEESSIVTRFAGRLEIEDLKTVKGEDSEGNAVDIVVSRSTELKLVDEGTGIVLNTHNIPYGSSIFVKDGETVGKGTVICKWDPYNGVIVSEFTGKIAYEDLEQGQSFMVEIDEQTGFQEKVISEARNKKLIPTLLVYGKEGELIRSYNLPVGAHLMVENGEKIKAGKVLVKIPRRSSKAGDITGGLPRITELLEARNPSNPAVVSEIDGVVSFGKIKRGNREIVIESKFGEIKKYLVKLSSQILVQENDFVRAGVPLSDGAITPDDILRIQGPAAVQQYLVNEIQEVYRLQGVKINDKHFEVVIRQMMRKVKVEDPGDTLFLEDQLIHTKDFILQNDKLYGMKVVEDAGDSSVLKPGQIISPRELRDENSLLKRTDKNLVVARDVITATATPVLQGITRASLQTKSFISAASFQETTKVLNEAAVAGKVDDLEGLKENVIVGHRIPAGTGMREYDNTIVGSKDDYNEMMANKEEYIY.

Cys70, Cys72, Cys85, and Cys88 together coordinate Zn(2+). Asp481, Asp483, and Asp485 together coordinate Mg(2+). Cys829, Cys903, Cys910, and Cys913 together coordinate Zn(2+).

The protein belongs to the RNA polymerase beta' chain family. In terms of assembly, the RNAP catalytic core consists of 2 alpha, 1 beta, 1 beta' and 1 omega subunit. When a sigma factor is associated with the core the holoenzyme is formed, which can initiate transcription. The cofactor is Mg(2+). Requires Zn(2+) as cofactor.

It carries out the reaction RNA(n) + a ribonucleoside 5'-triphosphate = RNA(n+1) + diphosphate. In terms of biological role, DNA-dependent RNA polymerase catalyzes the transcription of DNA into RNA using the four ribonucleoside triphosphates as substrates. The sequence is that of DNA-directed RNA polymerase subunit beta' from Flavobacterium johnsoniae (strain ATCC 17061 / DSM 2064 / JCM 8514 / BCRC 14874 / CCUG 350202 / NBRC 14942 / NCIMB 11054 / UW101) (Cytophaga johnsonae).